The following is a 32-amino-acid chain: Natriuretic peptide Coa_NP2 (32 aa).

Cysteines 8 and 24 form a disulfide.

It belongs to the natriuretic peptide family. Snake NP subfamily. As to expression, expressed by the venom gland.

It is found in the secreted. Functionally, snake venom natriuretic peptide that exhibits hypotensive and vasorelaxant effects. Produces a dose-dependent hypotension in rats, followed by significant increases in concentrations of markers of nitric oxide (NO) formation measured in the plasma and vasorelaxation in a thoracic aortic ring bath. The peptide may exert its hypotensive action, at least in part, through stimulation of NO production. The vasorelaxant effect is endothelium-dependent and does not appear to be mediated by the natriuretic peptide receptor-A, as its action is not modified by isatin (a potent NPR1 antagonist). May act by activating the natriuretic peptide receptor-B (NPR2). The sequence is that of Natriuretic peptide Coa_NP2 from Crotalus lutosus abyssus (Grand Canyon rattlesnake).